Consider the following 347-residue polypeptide: Glycerol-1-phosphate dehydrogenase [NAD(P)+] (347 aa).

Residues 94-98 and 116-119 each bind NAD(+); these read GKVID and TAAS. Residue aspartate 121 coordinates substrate. Residue serine 125 coordinates NAD(+). Residue aspartate 168 participates in substrate binding. Aspartate 168 and histidine 248 together coordinate Zn(2+). Histidine 252 is a substrate binding site. Histidine 264 contributes to the Zn(2+) binding site.

It belongs to the glycerol-1-phosphate dehydrogenase family. In terms of assembly, homooctamer. Zn(2+) is required as a cofactor.

The protein resides in the cytoplasm. The enzyme catalyses sn-glycerol 1-phosphate + NAD(+) = dihydroxyacetone phosphate + NADH + H(+). It carries out the reaction sn-glycerol 1-phosphate + NADP(+) = dihydroxyacetone phosphate + NADPH + H(+). It functions in the pathway membrane lipid metabolism; glycerophospholipid metabolism. Its activity is regulated as follows. Partially inhibited by divalent metal cations such as Co(2+), Cu(2+) and Ni(2+). Its function is as follows. Catalyzes the NAD(P)H-dependent reduction of dihydroxyacetonephosphate (DHAP or glycerone phosphate) to glycerol 1-phosphate (G1P). The G1P thus generated is used as the glycerophosphate backbone of phospholipids in the cellular membranes of Archaea. Is also able to catalyze the reverse reaction, i.e. the NAD(P)(+)-dependent oxidation of G1P but not of G3P. Is not active toward glycerol, dihydroxyacetone, glyceraldehyde-3-phosphate, glyceraldehyde and glycerol-2-phosphate. This is Glycerol-1-phosphate dehydrogenase [NAD(P)+] (egsA) from Methanothermobacter thermautotrophicus (strain ATCC 29096 / DSM 1053 / JCM 10044 / NBRC 100330 / Delta H) (Methanobacterium thermoautotrophicum).